The sequence spans 368 residues: Peptide chain release factor 2 (368 aa).

Gln-249 bears the N5-methylglutamine mark.

This sequence belongs to the prokaryotic/mitochondrial release factor family. In terms of processing, methylated by PrmC. Methylation increases the termination efficiency of RF2.

Its subcellular location is the cytoplasm. In terms of biological role, peptide chain release factor 2 directs the termination of translation in response to the peptide chain termination codons UGA and UAA. This chain is Peptide chain release factor 2, found in Rhodococcus erythropolis (strain PR4 / NBRC 100887).